The following is a 27-amino-acid chain: Protein YqiM (27 aa).

In Escherichia coli (strain K12), this protein is Protein YqiM.